We begin with the raw amino-acid sequence, 571 residues long: Putative F-box protein At5g39460 (571 aa).

An F-box domain is found at 9-55 (ACLLLTLPEDVFAVISRFLSPSDICNLILCGKSLCALVDSEKTWLVQ).

This chain is Putative F-box protein At5g39460, found in Arabidopsis thaliana (Mouse-ear cress).